We begin with the raw amino-acid sequence, 62 residues long: Photosystem II reaction center protein Z (62 aa).

A run of 2 helical transmembrane segments spans residues 8 to 28 (LVVA…ITLS) and 41 to 61 (VTAS…NSFV).

Belongs to the PsbZ family. PSII is composed of 1 copy each of membrane proteins PsbA, PsbB, PsbC, PsbD, PsbE, PsbF, PsbH, PsbI, PsbJ, PsbK, PsbL, PsbM, PsbT, PsbX, PsbY, PsbZ, Psb30/Ycf12, at least 3 peripheral proteins of the oxygen-evolving complex and a large number of cofactors. It forms dimeric complexes.

Its subcellular location is the plastid. It is found in the chloroplast thylakoid membrane. Its function is as follows. May control the interaction of photosystem II (PSII) cores with the light-harvesting antenna, regulates electron flow through the 2 photosystem reaction centers. PSII is a light-driven water plastoquinone oxidoreductase, using light energy to abstract electrons from H(2)O, generating a proton gradient subsequently used for ATP formation. This Cyanidioschyzon merolae (strain NIES-3377 / 10D) (Unicellular red alga) protein is Photosystem II reaction center protein Z.